The chain runs to 830 residues: Serine/threonine-protein kinase pkn2 (830 aa).

Residues 1–605 (MLAPDSLVLD…GELLRQRRRE (605 aa)) lie on the Cytoplasmic side of the membrane. A Protein kinase domain is found at 13–283 (FRVLRPLGSG…DALAAAHSAL (271 aa)). Residues 19 to 27 (LGSGGMGEV) and Lys-42 each bind ATP. The active-site Proton acceptor is the Asp-135. The disordered stretch occupies residues 296 to 326 (VPQPGSGATPSSGTSVFGTGSASGSSSGPTG). The segment covering 299 to 326 (PGSGATPSSGTSVFGTGSASGSSSGPTG) has biased composition (low complexity). In terms of domain architecture, Guanylate cyclase spans 396 to 511 (TVMLTDIQGF…EPMEVIEAVE (116 aa)). The helical transmembrane segment at 606-623 (AALVAGAVVLLGAGAAWL) threads the bilayer. Over 624–830 (SQRNDAGTRA…AIKSLKQKSD (207 aa)) the chain is Periplasmic.

It belongs to the protein kinase superfamily. Ser/Thr protein kinase family.

The protein resides in the cell membrane. It catalyses the reaction L-seryl-[protein] + ATP = O-phospho-L-seryl-[protein] + ADP + H(+). The catalysed reaction is L-threonyl-[protein] + ATP = O-phospho-L-threonyl-[protein] + ADP + H(+). Its function is as follows. Regulates the activity of endogenous beta-lactamase or related enzymes, by blocking their secretion by phosphorylation, in response to an external signal yet to be identified. This is Serine/threonine-protein kinase pkn2 (pkn2) from Myxococcus xanthus.